A 199-amino-acid polypeptide reads, in one-letter code: Probable cobalt-precorrin-6B C(15)-methyltransferase (decarboxylating) (199 aa).

S-adenosyl-L-methionine-binding positions include Thr24, 48–52 (GCGTG), Asp72, and Ala101.

The protein belongs to the methyltransferase superfamily. Archaeal-type CbiT family.

The enzyme catalyses Co-precorrin-6B + S-adenosyl-L-methionine = Co-precorrin-7 + S-adenosyl-L-homocysteine + CO2. The protein operates within cofactor biosynthesis; adenosylcobalamin biosynthesis; cob(II)yrinate a,c-diamide from sirohydrochlorin (anaerobic route): step 8/10. In terms of biological role, catalyzes the methylation of C-15 in cobalt-precorrin-6B followed by the decarboxylation of C-12 to form cobalt-precorrin-7. This chain is Probable cobalt-precorrin-6B C(15)-methyltransferase (decarboxylating), found in Saccharolobus islandicus (strain L.S.2.15 / Lassen #1) (Sulfolobus islandicus).